A 233-amino-acid chain; its full sequence is 5'-methylthioadenosine/S-adenosylhomocysteine nucleosidase (233 aa).

Glutamate 12 acts as the Proton acceptor in catalysis. Substrate contacts are provided by residues glycine 78, isoleucine 156, and 177-178; that span reads ME. Aspartate 201 serves as the catalytic Proton donor.

Belongs to the PNP/UDP phosphorylase family. MtnN subfamily.

It catalyses the reaction S-adenosyl-L-homocysteine + H2O = S-(5-deoxy-D-ribos-5-yl)-L-homocysteine + adenine. The enzyme catalyses S-methyl-5'-thioadenosine + H2O = 5-(methylsulfanyl)-D-ribose + adenine. It carries out the reaction 5'-deoxyadenosine + H2O = 5-deoxy-D-ribose + adenine. The protein operates within amino-acid biosynthesis; L-methionine biosynthesis via salvage pathway; S-methyl-5-thio-alpha-D-ribose 1-phosphate from S-methyl-5'-thioadenosine (hydrolase route): step 1/2. In terms of biological role, catalyzes the irreversible cleavage of the glycosidic bond in both 5'-methylthioadenosine (MTA) and S-adenosylhomocysteine (SAH/AdoHcy) to adenine and the corresponding thioribose, 5'-methylthioribose and S-ribosylhomocysteine, respectively. Also cleaves 5'-deoxyadenosine, a toxic by-product of radical S-adenosylmethionine (SAM) enzymes, into 5-deoxyribose and adenine. The polypeptide is 5'-methylthioadenosine/S-adenosylhomocysteine nucleosidase (Listeria monocytogenes serotype 4b (strain F2365)).